Here is a 638-residue protein sequence, read N- to C-terminus: Phosphomethylpyrimidine synthase (638 aa).

Substrate contacts are provided by residues Asn236, Met265, Tyr294, His330, 350 to 352 (SRG), 391 to 394 (DGLR), and Glu430. His434 contacts Zn(2+). Tyr457 lines the substrate pocket. His498 is a Zn(2+) binding site. [4Fe-4S] cluster is bound by residues Cys578, Cys581, and Cys586. Over residues 608-624 (AEGASQQEAEQGMQEMS) the composition is skewed to low complexity. The interval 608-633 (AEGASQQEAEQGMQEMSQKYKDAGRR) is disordered.

It belongs to the ThiC family. As to quaternary structure, homodimer. Requires [4Fe-4S] cluster as cofactor.

It carries out the reaction 5-amino-1-(5-phospho-beta-D-ribosyl)imidazole + S-adenosyl-L-methionine = 4-amino-2-methyl-5-(phosphooxymethyl)pyrimidine + CO + 5'-deoxyadenosine + formate + L-methionine + 3 H(+). Its pathway is cofactor biosynthesis; thiamine diphosphate biosynthesis. In terms of biological role, catalyzes the synthesis of the hydroxymethylpyrimidine phosphate (HMP-P) moiety of thiamine from aminoimidazole ribotide (AIR) in a radical S-adenosyl-L-methionine (SAM)-dependent reaction. This Hahella chejuensis (strain KCTC 2396) protein is Phosphomethylpyrimidine synthase.